Consider the following 259-residue polypeptide: Thiazole synthase (259 aa).

Catalysis depends on Lys95, which acts as the Schiff-base intermediate with DXP. 1-deoxy-D-xylulose 5-phosphate is bound by residues Gly156, 182–183 (AG), and 204–205 (NT).

The protein belongs to the ThiG family. As to quaternary structure, homotetramer. Forms heterodimers with either ThiH or ThiS.

It localises to the cytoplasm. It catalyses the reaction [ThiS sulfur-carrier protein]-C-terminal-Gly-aminoethanethioate + 2-iminoacetate + 1-deoxy-D-xylulose 5-phosphate = [ThiS sulfur-carrier protein]-C-terminal Gly-Gly + 2-[(2R,5Z)-2-carboxy-4-methylthiazol-5(2H)-ylidene]ethyl phosphate + 2 H2O + H(+). Its pathway is cofactor biosynthesis; thiamine diphosphate biosynthesis. In terms of biological role, catalyzes the rearrangement of 1-deoxy-D-xylulose 5-phosphate (DXP) to produce the thiazole phosphate moiety of thiamine. Sulfur is provided by the thiocarboxylate moiety of the carrier protein ThiS. In vitro, sulfur can be provided by H(2)S. This Baumannia cicadellinicola subsp. Homalodisca coagulata protein is Thiazole synthase.